We begin with the raw amino-acid sequence, 533 residues long: Glucose-6-phosphate exchanger SLC37A1 (533 aa).

Residues 18 to 38 traverse the membrane as a helical segment; sequence QWYRAFIFILTFLLYASFHLS. N-linked (GlcNAc...) asparagine glycosylation occurs at N81. The next 4 membrane-spanning stretches (helical) occupy residues 100–120, 129–149, 157–177, and 222–242; these read GALD…SGII, YLTF…LGYF, FYVV…PSVV, and SFVV…LFLI. The N-linked (GlcNAc...) asparagine glycan is linked to N263. 7 consecutive transmembrane segments (helical) span residues 304 to 324, 334 to 354, 366 to 386, 394 to 414, 423 to 443, 466 to 486, and 490 to 510; these read VVIL…TGAL, LCLL…PLYI, GELS…AGVI, ASTC…FSTV, IAML…ITTA, AIID…AGLL, and GWSN…LFLI.

This sequence belongs to the major facilitator superfamily. Organophosphate:Pi antiporter (OPA) (TC 2.A.1.4) family. In terms of tissue distribution, expressed in numerous tissues, with highest expression in pancreas, kidney, bone marrow, spleen, liver, small intestine, as well as in fetal brain, liver and spleen.

It localises to the endoplasmic reticulum membrane. It carries out the reaction D-glucose 6-phosphate(in) + phosphate(out) = D-glucose 6-phosphate(out) + phosphate(in). Inhibited by vanadate but not by chlorogenic acid. In terms of biological role, inorganic phosphate and glucose-6-phosphate antiporter. May transport cytoplasmic glucose-6-phosphate into the lumen of the endoplasmic reticulum and translocate inorganic phosphate into the opposite direction. Independent of a lumenal glucose-6-phosphatase. May not play a role in homeostatic regulation of blood glucose levels. The polypeptide is Glucose-6-phosphate exchanger SLC37A1 (Homo sapiens (Human)).